Consider the following 406-residue polypeptide: Na(+)/H(+) antiporter NhaA (406 aa).

12 helical membrane-spanning segments follow: residues 29–49, 75–95, 111–131, 141–161, 170–190, 195–215, 220–240, 242–262, 278–298, 306–326, 349–369, and 382–402; these read FAGI…NNIF, FIEL…GLEM, ILPA…YMFF, GWAI…SFFS, AFII…LALF, INTP…ILNY, QLFY…ESGI, GTLC…GEFN, YFIL…YFAF, ILAL…LGIM, FYSI…IGSI, and AAVI…LKYC.

The protein belongs to the NhaA Na(+)/H(+) (TC 2.A.33) antiporter family.

The protein localises to the cell inner membrane. The catalysed reaction is Na(+)(in) + 2 H(+)(out) = Na(+)(out) + 2 H(+)(in). Na(+)/H(+) antiporter that extrudes sodium in exchange for external protons. The protein is Na(+)/H(+) antiporter NhaA of Rickettsia massiliae (strain Mtu5).